Here is a 124-residue protein sequence, read N- to C-terminus: CBS domain-containing protein MJ0729 (124 aa).

CBS domains lie at 10–67 (MNKD…IEDL) and 70–124 (LIDE…YKNR).

In terms of assembly, exhibits a pH-dependent oligomerization state: at pH 7, the dominant species is a dimer, where each monomer is a two-CBS domain protein, and at pH 4.5-4.8, the dominant species is a tetramer, with an oblong shape. At pH 2.5, there is formation of intermolecular hydrogen bonds, suggesting the presence of high-molecular weight species. The physiological dimeric species is thermal and chemically very stable.

The sequence is that of CBS domain-containing protein MJ0729 from Methanocaldococcus jannaschii (strain ATCC 43067 / DSM 2661 / JAL-1 / JCM 10045 / NBRC 100440) (Methanococcus jannaschii).